We begin with the raw amino-acid sequence, 151 residues long: 1,4-dihydroxy-2-naphthoyl-CoA hydrolase (151 aa).

Residue D23 is part of the active site.

This sequence belongs to the 4-hydroxybenzoyl-CoA thioesterase family. DHNA-CoA hydrolase subfamily.

It carries out the reaction 1,4-dihydroxy-2-naphthoyl-CoA + H2O = 1,4-dihydroxy-2-naphthoate + CoA + H(+). Its pathway is cofactor biosynthesis; phylloquinone biosynthesis. The protein operates within quinol/quinone metabolism; 1,4-dihydroxy-2-naphthoate biosynthesis; 1,4-dihydroxy-2-naphthoate from chorismate: step 7/7. In terms of biological role, catalyzes the hydrolysis of 1,4-dihydroxy-2-naphthoyl-CoA (DHNA-CoA) to 1,4-dihydroxy-2-naphthoate (DHNA), a reaction involved in phylloquinone (vitamin K1) biosynthesis. The sequence is that of 1,4-dihydroxy-2-naphthoyl-CoA hydrolase from Prochlorococcus marinus (strain MIT 9211).